Reading from the N-terminus, the 148-residue chain is Leghemoglobin-1 (148 aa).

The region spanning 2 to 146 is the Globin domain; sequence GFTDKQEALV…LATAIKKAMK (145 aa). 2 positions are modified to nitrated tyrosine: Tyr24 and Tyr29. Ser44 serves as a coordination point for heme b. Ser44 carries the phosphoserine modification. An O2-binding site is contributed by His61. The heme b site is built by His93 and Lys96. Tyr134 carries the post-translational modification Nitrated tyrosine.

This sequence belongs to the plant globin family. In terms of assembly, monomer. Post-translationally, nitrated in effective nodules and particularly in hypoxic conditions; this mechanism may play a protective role in the symbiosis by buffering toxic peroxynitrite NO(2)(-). Nitration level decrease during nodule senescence. In terms of processing, phosphorylation at Ser-44 disrupts the molecular environment of its porphyrin ring oxygen binding pocket, thus leading to a reduced oxygen consumption and to the delivery of oxygen O(2) to symbiosomes. As to expression, root nodules.

The protein localises to the cytoplasm. The protein resides in the cytosol. It localises to the nucleus. Leghemoglobin that reversibly binds oxygen O(2) through a pentacoordinated heme iron. In root nodules, facilitates the diffusion of oxygen to the bacteroids while preventing the bacterial nitrogenase from being inactivated by buffering dioxygen, nitric oxide and carbon monoxide, and promoting the formation of reactive oxygen species (ROS, e.g. H(2)O(2)). This role is essential for symbiotic nitrogen fixation (SNF). This chain is Leghemoglobin-1, found in Pisum sativum (Garden pea).